The chain runs to 419 residues: S-adenosylmethionine synthase (419 aa).

Residue H15 participates in ATP binding. D17 serves as a coordination point for Mg(2+). E43 provides a ligand contact to K(+). L-methionine contacts are provided by E56 and Q99. The segment at 99–109 is flexible loop; the sequence is QSPEIAQGVSC. ATP is bound by residues 173–175, 253–254, D262, 268–269, A285, and K289; these read DGK, RF, and RK. D262 contributes to the L-methionine binding site. Position 293 (K293) interacts with L-methionine.

The protein belongs to the AdoMet synthase family. In terms of assembly, homotetramer; dimer of dimers. The cofactor is Mg(2+). It depends on K(+) as a cofactor.

The protein resides in the cytoplasm. The catalysed reaction is L-methionine + ATP + H2O = S-adenosyl-L-methionine + phosphate + diphosphate. It functions in the pathway amino-acid biosynthesis; S-adenosyl-L-methionine biosynthesis; S-adenosyl-L-methionine from L-methionine: step 1/1. In terms of biological role, catalyzes the formation of S-adenosylmethionine (AdoMet) from methionine and ATP. The overall synthetic reaction is composed of two sequential steps, AdoMet formation and the subsequent tripolyphosphate hydrolysis which occurs prior to release of AdoMet from the enzyme. This is S-adenosylmethionine synthase from Gloeobacter violaceus (strain ATCC 29082 / PCC 7421).